A 138-amino-acid polypeptide reads, in one-letter code: Holo-[acyl-carrier-protein] synthase (138 aa).

2 residues coordinate Mg(2+): D8 and E56.

This sequence belongs to the P-Pant transferase superfamily. AcpS family. Requires Mg(2+) as cofactor.

Its subcellular location is the cytoplasm. It carries out the reaction apo-[ACP] + CoA = holo-[ACP] + adenosine 3',5'-bisphosphate + H(+). In terms of biological role, transfers the 4'-phosphopantetheine moiety from coenzyme A to a Ser of acyl-carrier-protein. This is Holo-[acyl-carrier-protein] synthase from Thermoanaerobacter pseudethanolicus (strain ATCC 33223 / 39E) (Clostridium thermohydrosulfuricum).